The chain runs to 139 residues: Actin-depolymerizing factor 1 (139 aa).

An ADF-H domain is found at 5–139 (SSGLAVNDEC…SLDIVRSRTN (135 aa)).

The protein belongs to the actin-binding proteins ADF family. Expressed in pollen.

Actin-depolymerizing protein. Severs actin filaments (F-actin) and binds to actin monomers. The protein is Actin-depolymerizing factor 1 (ADF1) of Zea mays (Maize).